We begin with the raw amino-acid sequence, 113 residues long: Probable 4-amino-4-deoxy-L-arabinose-phosphoundecaprenol flippase subunit ArnE (113 aa).

The next 3 helical transmembrane spans lie at 39–59 (IFWL…WLRL), 62–82 (ILPL…VTLI), and 91–111 (VNVK…LMSM). Residues 42–111 (LITAIAMLGF…IMLGIVLMSM (70 aa)) form the EamA domain.

This sequence belongs to the ArnE family. Heterodimer of ArnE and ArnF.

It is found in the cell inner membrane. The protein operates within bacterial outer membrane biogenesis; lipopolysaccharide biosynthesis. Translocates 4-amino-4-deoxy-L-arabinose-phosphoundecaprenol (alpha-L-Ara4N-phosphoundecaprenol) from the cytoplasmic to the periplasmic side of the inner membrane. In Proteus mirabilis (strain HI4320), this protein is Probable 4-amino-4-deoxy-L-arabinose-phosphoundecaprenol flippase subunit ArnE.